The chain runs to 1131 residues: Protein DWARF 53 (1131 aa).

In terms of domain architecture, Clp R spans 8-181 (ARQCLSPAAV…KLAILRPAPP (174 aa)). Repeat stretches follow at residues 12 to 85 (LSPA…LDRL) and 103 to 181 (VSNS…PAPP). Residues 511–574 (NRDPYKPFPR…ISSPSVTNKR (64 aa)) are disordered. The segment covering 558–569 (SSSTARPISSPS) has biased composition (low complexity). Positions 578-582 (LVLNL) match the EAR 1 motif. The disordered stretch occupies residues 588 to 655 (KSDENLQERG…KRVEDSERSV (68 aa)). Residues 597–609 (GMQSQHGTLSNVD) are compositionally biased toward polar residues. Over residues 646–655 (KRVEDSERSV) the composition is skewed to basic and acidic residues. Residues 799–803 (LDLNL) carry the EAR 2 motif. Disordered stretches follow at residues 951–970 (ISDD…RLHR) and 976–1002 (FDLN…NSYG). Positions 976–981 (FDLNLP) match the EAR 3 motif. Residues 982 to 993 (VDEDEPLDADDD) show a composition bias toward acidic residues.

Belongs to the ClpA/ClpB family. Interacts with D3. Interacts with D14. The interaction with D14 is enhanced in the presence of strigolactones. The interaction with D14 occurs in the presence of (2'R) stereoisomers of strigolactones, but not (2'S) stereoisomers. Interacts with the TOPLESS-related proteins TPR1, TPR2 and TPR3. Interacts with SPL14/IPA1. In terms of processing, polyubiquitinated. Strigolactone, but not karrikin, triggers rapid SCF(D3)-dependent degradation via the proteasome. Expressed in the shoot bases of seedlings, young leaves, axillary buds and young panicles. Expressed in young roots vasculature, culms, internodes and nodes, preferentially in the parenchyma cells surrounding the xylem.

The protein resides in the nucleus. Repressor of strigolactones (SL) signaling. Subjected to a negative feedback control of SL signaling. Suppresses the transcriptional activation activity of SPL14/IPA1 in SL signaling. Acts with SPL14/IPA1 to mediate the SL-regulated tiller development. Subject to a negative feedback regulation by SPL14/IPA1, which binds to D53 promoter to repress D53 gene expression. The protein is Protein DWARF 53 of Oryza sativa subsp. japonica (Rice).